Consider the following 218-residue polypeptide: Pyridoxine/pyridoxamine 5'-phosphate oxidase (218 aa).

FMN-binding positions include 66-71, Arg-87, Lys-88, and Gln-110; that span reads RVVLLK. Position 71 (Lys-71) interacts with substrate. Substrate is bound by residues Tyr-128, Arg-132, and Ser-136. Residues 145 to 146 and Trp-190 each bind FMN; that span reads QS. 196–198 contacts substrate; that stretch reads RLH. Arg-200 is an FMN binding site.

This sequence belongs to the pyridoxamine 5'-phosphate oxidase family. In terms of assembly, homodimer. It depends on FMN as a cofactor.

It catalyses the reaction pyridoxamine 5'-phosphate + O2 + H2O = pyridoxal 5'-phosphate + H2O2 + NH4(+). The enzyme catalyses pyridoxine 5'-phosphate + O2 = pyridoxal 5'-phosphate + H2O2. The protein operates within cofactor metabolism; pyridoxal 5'-phosphate salvage; pyridoxal 5'-phosphate from pyridoxamine 5'-phosphate: step 1/1. Its pathway is cofactor metabolism; pyridoxal 5'-phosphate salvage; pyridoxal 5'-phosphate from pyridoxine 5'-phosphate: step 1/1. In terms of biological role, catalyzes the oxidation of either pyridoxine 5'-phosphate (PNP) or pyridoxamine 5'-phosphate (PMP) into pyridoxal 5'-phosphate (PLP). The polypeptide is Pyridoxine/pyridoxamine 5'-phosphate oxidase (Anaplasma marginale (strain St. Maries)).